Reading from the N-terminus, the 314-residue chain is Mevalonate kinase (314 aa).

103–109 (GLGTSAA) is a binding site for ATP. D150 functions as the Proton acceptor in the catalytic mechanism.

This sequence belongs to the GHMP kinase family. Mevalonate kinase subfamily. Homodimer. Mg(2+) serves as cofactor.

The protein resides in the cytoplasm. The catalysed reaction is (R)-mevalonate + ATP = (R)-5-phosphomevalonate + ADP + H(+). It participates in isoprenoid biosynthesis; isopentenyl diphosphate biosynthesis via mevalonate pathway; isopentenyl diphosphate from (R)-mevalonate: step 1/3. Catalyzes the phosphorylation of (R)-mevalonate (MVA) to (R)-mevalonate 5-phosphate (MVAP). Functions in the mevalonate (MVA) pathway leading to isopentenyl diphosphate (IPP), a key precursor for the biosynthesis of isoprenoid compounds such as archaeal membrane lipids. This is Mevalonate kinase from Saccharolobus solfataricus (strain ATCC 35092 / DSM 1617 / JCM 11322 / P2) (Sulfolobus solfataricus).